The sequence spans 268 residues: MQSGTVDGLYHEVHGGPASDRQTVILSAGLGGSGTFWAPQMQALMSRFRVVLYDHRGTGRSARTLTDPHTVAAMGDDIVKLMDALGLERAHVVGHAAGGNAGLALALNHPDRLDKLVVVNGWSRPDPHIKRCFDTRLALLNDTGIAAYVHAQPLFLYPADWLSANNARLEAEEVHHINGFPSPDVMRTRIQALLEFDIDEDLETIRCPVLVSASADDMLVPLSCSRRLAERLPNATLDIAPWGGHGFTVTAPEAFNAAVLNFLSGEAA.

One can recognise an AB hydrolase-1 domain in the interval 24–243 (VILSAGLGGS…NATLDIAPWG (220 aa)).

This sequence belongs to the AB hydrolase superfamily. Hydrolase RutD family.

It catalyses the reaction carbamate + 2 H(+) = NH4(+) + CO2. Involved in pyrimidine catabolism. May facilitate the hydrolysis of carbamate, a reaction that can also occur spontaneously. In Caulobacter sp. (strain K31), this protein is Putative carbamate hydrolase RutD.